A 195-amino-acid polypeptide reads, in one-letter code: MSTIVIAVIALAALAAVFGAILGFASIRFKVEADPIVDQIDAILPQTQCGQCGYPGCRPYAEAIANGDAINKCPPGGQATIEKLADLMGVEVQDSAHDLDNKVKMVAFIHEDMCIGCTKCIQACPVDAIVGGNKAVHTVIKNECTGCDLCVAPCPTDCIEMIPVQTTPESWKWQLNAIPVVNVTDSAPAAQKSAN.

Topologically, residues 1–3 (MST) are periplasmic. Residues 4–24 (IVIAVIALAALAAVFGAILGF) form a helical membrane-spanning segment. Over 25 to 195 (ASIRFKVEAD…SAPAAQKSAN (171 aa)) the chain is Cytoplasmic. The 59-residue stretch at 32–90 (EADPIVDQIDAILPQTQCGQCGYPGCRPYAEAIANGDAINKCPPGGQATIEKLADLMGV) folds into the 4Fe-4S domain. [4Fe-4S] cluster contacts are provided by Cys-49, Cys-52, Cys-57, Cys-73, Cys-114, Cys-117, Cys-120, Cys-124, Cys-144, Cys-147, Cys-150, and Cys-154. 4Fe-4S ferredoxin-type domains are found at residues 105 to 134 (MVAF…GGNK) and 135 to 164 (AVHT…MIPV).

Belongs to the 4Fe4S bacterial-type ferredoxin family. RnfB subfamily. As to quaternary structure, the complex is composed of six subunits: RnfA, RnfB, RnfC, RnfD, RnfE and RnfG. It depends on [4Fe-4S] cluster as a cofactor.

It is found in the cell inner membrane. Its function is as follows. Part of a membrane-bound complex that couples electron transfer with translocation of ions across the membrane. The protein is Ion-translocating oxidoreductase complex subunit B of Vibrio cholerae serotype O1 (strain ATCC 39541 / Classical Ogawa 395 / O395).